The following is a 372-amino-acid chain: Fatty acid 2-hydroxylase (372 aa).

The region spanning 8–86 is the Cytochrome b5 heme-binding domain; it reads AASFSPSEVQ…LEQYYVGELR (79 aa). Histidine 43 and histidine 69 together coordinate heme. The next 2 membrane-spanning stretches (helical) occupy residues 168–188 and 213–233; these read VWYS…WSYY and SMFP…EYLI. The region spanning 219-361 is the Fatty acid hydroxylase domain; that stretch reads FMLGIFLWSL…TKLWDYCFHT (143 aa). 5 residues coordinate Zn(2+): histidine 234, histidine 239, histidine 257, histidine 260, and histidine 261. 2 consecutive transmembrane segments (helical) span residues 271 to 291 and 292 to 312; these read VFPP…LQLI and LPEA…VLYD. Positions 315, 319, 336, 339, and 340 each coordinate Zn(2+).

It belongs to the sterol desaturase family. SCS7 subfamily. It depends on Zn(2+) as a cofactor.

Its subcellular location is the endoplasmic reticulum membrane. The protein localises to the microsome membrane. It catalyses the reaction a 1,2-saturated fatty acid + 2 Fe(II)-[cytochrome b5] + O2 + 2 H(+) = a (R)-2-hydroxy fatty acid + 2 Fe(III)-[cytochrome b5] + H2O. The enzyme catalyses hexadecanoate + 2 Fe(II)-[cytochrome b5] + O2 + 2 H(+) = (R)-2-hydroxyhexadecanoate + 2 Fe(III)-[cytochrome b5] + H2O. The catalysed reaction is octadecanoate + 2 Fe(II)-[cytochrome b5] + O2 + 2 H(+) = (R)-2-hydroxyoctadecanoate + 2 Fe(III)-[cytochrome b5] + H2O. It carries out the reaction docosanoate + 2 Fe(II)-[cytochrome b5] + O2 + 2 H(+) = 2-hydroxydocosanoate + 2 Fe(III)-[cytochrome b5] + H2O. It catalyses the reaction tetracosanoate + 2 Fe(II)-[cytochrome b5] + O2 + 2 H(+) = (R)-2-hydroxytetracosanoate + 2 Fe(III)-[cytochrome b5] + H2O. Its pathway is lipid metabolism; fatty acid metabolism. The protein operates within sphingolipid metabolism; galactosylceramide biosynthesis. In terms of biological role, catalyzes the hydroxylation of free fatty acids at the C-2 position to produce 2-hydroxy fatty acids, which are building blocks of sphingolipids and glycosphingolipids common in neural tissue and epidermis. FA2H is stereospecific for the production of (R)-2-hydroxy fatty acids. Plays an essential role in the synthesis of galactosphingolipids of the myelin sheath. Responsible for the synthesis of sphingolipids and glycosphingolipids involved in the formation of epidermal lamellar bodies critical for skin permeability barrier. Participates in the synthesis of glycosphingolipids and a fraction of type II wax diesters in sebaceous gland, specifically regulating hair follicle homeostasis. Involved in the synthesis of sphingolipids of plasma membrane rafts, controlling lipid raft mobility and trafficking of raft-associated proteins. This chain is Fatty acid 2-hydroxylase (FA2H), found in Macaca fascicularis (Crab-eating macaque).